Reading from the N-terminus, the 234-residue chain is Isoprenyl transferase (234 aa).

Asp-13 is a catalytic residue. Position 13 (Asp-13) interacts with Mg(2+). Substrate-binding positions include 14-17, Trp-18, Arg-26, His-30, and 58-60; these read GNGR and STE. Asn-61 (proton acceptor) is an active-site residue. Residues Trp-62, Arg-64, Arg-180, and 186–188 contribute to the substrate site; that span reads RLS. Mg(2+) is bound at residue Glu-199.

Belongs to the UPP synthase family. Homodimer. Requires Mg(2+) as cofactor.

Catalyzes the condensation of isopentenyl diphosphate (IPP) with allylic pyrophosphates generating different type of terpenoids. The chain is Isoprenyl transferase (uppS) from Helicobacter pylori (strain ATCC 700392 / 26695) (Campylobacter pylori).